A 263-amino-acid polypeptide reads, in one-letter code: Small ribosomal subunit protein uS2m (263 aa).

The N-terminal 15 residues, 1 to 15 (MLSRKLSPEQLVARR), are a transit peptide targeting the mitochondrion.

The protein belongs to the universal ribosomal protein uS2 family. Component of the mitochondrial small ribosomal subunit (mt-SSU). Mature yeast 74S mitochondrial ribosomes consist of a small (37S) and a large (54S) subunit. The 37S small subunit contains a 15S ribosomal RNA (15S mt-rRNA) and at least 32 different proteins. The 54S large subunit contains a 21S rRNA (21S mt-rRNA) and at least 45 different proteins.

It localises to the mitochondrion. Functionally, component of the mitochondrial ribosome (mitoribosome), a dedicated translation machinery responsible for the synthesis of mitochondrial genome-encoded proteins, including at least some of the essential transmembrane subunits of the mitochondrial respiratory chain. The mitoribosomes are attached to the mitochondrial inner membrane and translation products are cotranslationally integrated into the membrane. The protein is Small ribosomal subunit protein uS2m of Schizosaccharomyces pombe (strain 972 / ATCC 24843) (Fission yeast).